Consider the following 672-residue polypeptide: Glycerophosphocholine phosphodiesterase GPCPD1 (672 aa).

Residues 1–115 (MTPSQVAFEI…IIIDDGQFGI (115 aa)) form the CBM20 domain. Substrate contacts are provided by residues lysine 70 and 88–89 (HK). A phosphoserine mark is found at serine 175 and serine 424. The GP-PDE domain occupies 318–618 (PLDVGHRGAG…DRIYDWMPEQ (301 aa)). Tyrosine 608 carries the post-translational modification Phosphotyrosine.

This sequence belongs to the glycerophosphoryl diester phosphodiesterase family. In terms of tissue distribution, widely expressed, with highest expression in spinal chord.

It localises to the cytoplasm. It is found in the cytosol. It carries out the reaction sn-glycerol 3-phosphocholine + H2O = sn-glycerol 3-phosphate + choline + H(+). In terms of biological role, may be involved in the negative regulation of skeletal muscle differentiation, independently of its glycerophosphocholine phosphodiesterase activity. The polypeptide is Glycerophosphocholine phosphodiesterase GPCPD1 (GPCPD1) (Homo sapiens (Human)).